The following is a 205-amino-acid chain: Protein N-terminal glutamine amidohydrolase (205 aa).

Active-site residues include cysteine 20, histidine 74, and aspartate 90.

Belongs to the NTAQ1 family. Monomer.

The enzyme catalyses N-terminal L-glutaminyl-[protein] + H2O = N-terminal L-glutamyl-[protein] + NH4(+). In terms of biological role, mediates the side-chain deamidation of N-terminal glutamine residues to glutamate, an important step in N-end rule pathway of protein degradation. Conversion of the resulting N-terminal glutamine to glutamate renders the protein susceptible to arginylation, polyubiquitination and degradation as specified by the N-end rule. Does not act on substrates with internal or C-terminal glutamine and does not act on non-glutamine residues in any position. In Drosophila willistoni (Fruit fly), this protein is Protein N-terminal glutamine amidohydrolase (tun).